Consider the following 496-residue polypeptide: Glutathione reductase, cytosolic (496 aa).

FAD contacts are provided by S32, G33, E52, T69, C70, and K78. S32 contributes to the glutathione binding site. Cysteines 70 and 75 form a disulfide. Glutathione is bound at residue Y127. FAD is bound at residue G143. G208, I211, E214, R231, R237, and G294 together coordinate NADP(+). The FAD site is built by D335 and T343. Residue A373 coordinates NADP(+). Residue H469 participates in FAD binding. Residue H469 is the Proton acceptor of the active site.

This sequence belongs to the class-I pyridine nucleotide-disulfide oxidoreductase family. In terms of assembly, homodimer. Requires FAD as cofactor.

It localises to the cytoplasm. It catalyses the reaction 2 glutathione + NADP(+) = glutathione disulfide + NADPH + H(+). In terms of biological role, catalyzes the reduction of glutathione disulfide (GSSG) to reduced glutathione (GSH). Constitutes the major mechanism to maintain a high GSH:GSSG ratio in the cytosol. The sequence is that of Glutathione reductase, cytosolic (GRC2) from Oryza sativa subsp. japonica (Rice).